The primary structure comprises 285 residues: Zinc transporter ZupT (285 aa).

The next 3 membrane-spanning stretches (helical) occupy residues 13 to 33 (AFLL…IAFF), 41 to 61 (FLCV…MIEM), and 80 to 100 (WITV…DKFV). Asn153 and Glu156 together coordinate Fe(2+). Residue Glu156 participates in Zn(2+) binding. The chain crosses the membrane as a helical span at residues 160–180 (TFVSALEGASLAIPITIAIAI). His181 contributes to the Zn(2+) binding site. The Fe(2+) site is built by Asn182, Glu185, and Glu214. Residue Glu185 participates in Zn(2+) binding. A run of 3 helical transmembrane segments spans residues 204-224 (FLYS…GYTL), 228-248 (IFND…MVFI), and 265-285 (LAIY…LLFI).

It belongs to the ZIP transporter (TC 2.A.5) family. ZupT subfamily.

It is found in the cell membrane. The catalysed reaction is Zn(2+)(in) = Zn(2+)(out). Functionally, mediates zinc uptake. May also transport other divalent cations. The protein is Zinc transporter ZupT of Clostridium perfringens (strain 13 / Type A).